Here is a 428-residue protein sequence, read N- to C-terminus: Histidine--tRNA ligase (428 aa).

It belongs to the class-II aminoacyl-tRNA synthetase family. In terms of assembly, homodimer.

The protein resides in the cytoplasm. It carries out the reaction tRNA(His) + L-histidine + ATP = L-histidyl-tRNA(His) + AMP + diphosphate + H(+). The protein is Histidine--tRNA ligase of Sorangium cellulosum (strain So ce56) (Polyangium cellulosum (strain So ce56)).